Here is a 199-residue protein sequence, read N- to C-terminus: Superoxide dismutase [Mn/Fe] (199 aa).

Positions 27, 81, 161, and 165 each coordinate Fe(3+). 4 residues coordinate Mn(2+): His27, His81, Asp161, and His165.

This sequence belongs to the iron/manganese superoxide dismutase family. In terms of assembly, homodimer. Requires Mn(2+) as cofactor. The cofactor is Fe(3+).

The enzyme catalyses 2 superoxide + 2 H(+) = H2O2 + O2. Its function is as follows. Destroys superoxide anion radicals which are normally produced within the cells and which are toxic to biological systems. Catalyzes the dismutation of superoxide anion radicals into O2 and H2O2 by successive reduction and oxidation of the transition metal ion at the active site. Also contributes to the inhibition of lipid oxidation. Manganese-preferring enzyme, less active with iron than with manganese. The chain is Superoxide dismutase [Mn/Fe] (sodA) from Staphylococcus xylosus.